Reading from the N-terminus, the 694-residue chain is Polyphosphate kinase (694 aa).

Asn-45 is a binding site for ATP. Residues Arg-367 and Arg-397 each contribute to the Mg(2+) site. Residue His-427 is the Phosphohistidine intermediate of the active site. ATP is bound by residues Tyr-460, Arg-553, and His-580.

Belongs to the polyphosphate kinase 1 (PPK1) family. Mg(2+) serves as cofactor. An intermediate of this reaction is the autophosphorylated ppk in which a phosphate is covalently linked to a histidine residue through a N-P bond.

It catalyses the reaction [phosphate](n) + ATP = [phosphate](n+1) + ADP. In terms of biological role, catalyzes the reversible transfer of the terminal phosphate of ATP to form a long-chain polyphosphate (polyP). This Campylobacter jejuni subsp. doylei (strain ATCC BAA-1458 / RM4099 / 269.97) protein is Polyphosphate kinase.